The primary structure comprises 339 residues: Nitrilase 2 (339 aa).

N-acetylserine is present on serine 2. Residues valine 18–leucine 290 form the CN hydrolase domain. Glutamate 58 (proton acceptor) is an active-site residue. Lysine 145 (proton donor) is an active-site residue. Residue cysteine 179 is the Nucleophile of the active site.

The protein belongs to the carbon-nitrogen hydrolase superfamily. Nitrilase family.

It localises to the cell membrane. The catalysed reaction is a nitrile + 2 H2O = a carboxylate + NH4(+). In terms of biological role, can convert indole-3-acetonitrile to the plant hormone indole-3-acetic acid. The protein is Nitrilase 2 (NIT2) of Arabidopsis thaliana (Mouse-ear cress).